Reading from the N-terminus, the 212-residue chain is External core antigen (212 aa).

An N-terminal signal peptide occupies residues 1 to 19; it reads MQLFHLCLIIFCSCPTVQA. An HBEAG region spans residues 25–27; the sequence is GWL. The disordered stretch occupies residues 165-212; that stretch reads NAPILSTLPETTVVRRRGRSPRRRTPSPRRRRSQSPRRRRSQSPASQC. Residues 178 to 205 show a composition bias toward basic residues; the sequence is VRRRGRSPRRRTPSPRRRRSQSPRRRRS. 3 consecutive repeat copies span residues 184–190, 191–198, and 199–206. The 3 X 8 AA repeats of S-P-R-R-R-R-S-Q stretch occupies residues 184 to 206; sequence SPRRRTPSPRRRRSQSPRRRRSQ. Positions 184–212 are excised as a propeptide; that stretch reads SPRRRTPSPRRRRSQSPRRRRSQSPASQC.

It belongs to the orthohepadnavirus precore antigen family. As to quaternary structure, homodimerizes. Phosphorylated. Post-translationally, cleaved by host furin.

It is found in the secreted. It localises to the host nucleus. May regulate immune response to the intracellular capsid in acting as a T-cell tolerogen, by having an immunoregulatory effect which prevents destruction of infected cells by cytotoxic T-cells. This immune regulation may predispose to chronicity during perinatal infections and prevent severe liver injury during adult infections. The chain is External core antigen from Hepatitis B virus genotype F2 (isolate Brazil/w4B) (HBV-F).